We begin with the raw amino-acid sequence, 224 residues long: CDP-diacylglycerol--inositol 3-phosphatidyltransferase (224 aa).

Topologically, residues 1–8 are cytoplasmic; the sequence is MTIAEHDN. Residues 9 to 29 traverse the membrane as a helical segment; it reads VFIFVPNLIGYARIVLALIAF. Residues 30–35 are Lumenal-facing; sequence WFMSTN. The chain crosses the membrane as a helical span at residues 36–52; the sequence is YVISGWCYVTSALLDAV. Mg(2+) contacts are provided by Asp-50 and Asp-53. The Cytoplasmic portion of the chain corresponds to 53–76; that stretch reads DGQAARAFNQSTRFGAMLDQLTDR. Gly-54, Arg-58, and Thr-64 together coordinate a CDP-1,2-diacyl-sn-glycerol. Asp-71 and Asp-75 together coordinate Mg(2+). Catalysis depends on Asp-75, which acts as the Proton acceptor. A helical transmembrane segment spans residues 77–97; it reads CGTTGLLVTLAYFYPRYMFWF. Residue Gln-98 is a topological domain, lumenal. A helical membrane pass occupies residues 99–119; sequence LSIAIDVACHWLFMQTSVVVG. The Cytoplasmic segment spans residues 120 to 138; that stretch reads RSSHKVNDNFIMRLYYQKD. The helical transmembrane segment at 139–159 threads the bilayer; the sequence is ILTFMCCVNELFYVCLYLLHF. Over 160-163 the chain is Lumenal; sequence TYGP. The helical transmembrane segment at 164–184 threads the bilayer; it reads LIFGASLFKILAFLTGPFAVL. The Cytoplasmic segment spans residues 185-224; the sequence is KALISVMHAYVAGIDLAAVDVRERQERRQKSEPVSGKKVE.

The protein belongs to the CDP-alcohol phosphatidyltransferase class-I family. It depends on Mn(2+) as a cofactor. The cofactor is Mg(2+). In adults, expression is higher in the head than in the body (at protein level).

The protein resides in the apical cell membrane. It localises to the lateral cell membrane. The catalysed reaction is a CDP-1,2-diacyl-sn-glycerol + myo-inositol = a 1,2-diacyl-sn-glycero-3-phospho-(1D-myo-inositol) + CMP + H(+). Catalyzes the biosynthesis of phosphatidylinositol (PtdIns) as well as PtdIns:inositol exchange reaction. May thus act to reduce an excessive cellular PtdIns content. The exchange activity is due to the reverse reaction of PtdIns synthase and is dependent on CMP, which is tightly bound to the enzyme. Required for the regeneration of the signaling molecule phosphatidylinositol 4,5-bisphosphate (PtdInsP2) from phosphatidic acid (PA) and maintenance of its steady supply during signaling, thus playing an essential role during phospholipase C-mediated transduction. This function is essential in photoreceptors for light-activated recycling of PtdInsP2 during phototransduction. As a key enzyme of the phosphoinositide pathway, indirectly involved in the polarized secretion of basal membrane (BM) proteins in follicle epithelial (FE) cells through promoting PtdInsP2 synthesis in the apical and lateral plasma membranes of FE cells. PtdInsP2 controls the localization of Crag and perhaps the localization and expression of strat, both of which are essential for restricting the secretion of BM proteins to the basal surface. The protein is CDP-diacylglycerol--inositol 3-phosphatidyltransferase of Drosophila melanogaster (Fruit fly).